A 136-amino-acid chain; its full sequence is Histone H3 (136 aa).

The segment at 1 to 43 is disordered; the sequence is MARTKQTARKSTGGKAPRKQLASKAARKSAPSTGGVKKPHRYK. Lysine 5 carries the post-translational modification N6,N6,N6-trimethyllysine; alternate. Residue lysine 5 is modified to N6,N6-dimethyllysine; alternate. N6-methyllysine; alternate is present on residues lysine 5 and lysine 10. An N6-acetyllysine; alternate modification is found at lysine 10. At serine 11 the chain carries Phosphoserine. Residue lysine 15 is modified to N6,N6-dimethyllysine; alternate. N6-acetyllysine; alternate is present on residues lysine 15, lysine 19, lysine 24, lysine 28, and lysine 37. Lysine 19, lysine 24, lysine 28, and lysine 37 each carry N6-methyllysine; alternate. N6,N6,N6-trimethyllysine; alternate occurs at positions 28 and 37. 2 positions are modified to N6,N6-dimethyllysine; alternate: lysine 28 and lysine 37. Residues lysine 57 and lysine 65 each carry the N6-acetyllysine modification. N6,N6,N6-trimethyllysine; alternate is present on lysine 80. Lysine 80 carries the post-translational modification N6,N6-dimethyllysine; alternate. The residue at position 80 (lysine 80) is an N6-methyllysine; alternate.

This sequence belongs to the histone H3 family. The nucleosome is a histone octamer containing two molecules each of H2A, H2B, H3 and H4 assembled in one H3-H4 heterotetramer and two H2A-H2B heterodimers. The octamer wraps approximately 147 bp of DNA. Post-translationally, phosphorylated to form H3S10ph. H3S10ph promotes subsequent H3K14ac formation and is required for transcriptional activation through TBP recruitment to the promoters. In terms of processing, mono-, di- and trimethylated by the COMPASS complex to form H3K4me1/2/3. H3K4me activates gene expression by regulating transcription elongation and plays a role in telomere length maintenance. H3K4me enrichment correlates with transcription levels, and occurs in a 5' to 3' gradient with H3K4me3 enrichment at the 5'-end of genes, shifting to H3K4me2 and then H3K4me1. Methylated by SET2 to form H3K36me. H3K36me represses gene expression. Methylated by DOT1 to form H3K79me. H3K79me is required for association of SIR proteins with telomeric regions and for telomeric silencing. The COMPASS-mediated formation of H3K4me2/3 and the DOT1-mediated formation of H3K79me require H2BK123ub1. Acetylation of histone H3 leads to transcriptional activation. H3K14ac formation by GCN5 is promoted by H3S10ph. H3K14ac can also be formed by ESA1. H3K56ac formation occurs predominantly in newly synthesized H3 molecules during G1, S and G2/M of the cell cycle and may be involved in DNA repair.

It is found in the nucleus. The protein localises to the chromosome. Its function is as follows. Core component of nucleosome. Nucleosomes wrap and compact DNA into chromatin, limiting DNA accessibility to the cellular machineries which require DNA as a template. Histones thereby play a central role in transcription regulation, DNA repair, DNA replication and chromosomal stability. DNA accessibility is regulated via a complex set of post-translational modifications of histones, also called histone code, and nucleosome remodeling. This is Histone H3 (HHT1) from Phaeosphaeria nodorum (strain SN15 / ATCC MYA-4574 / FGSC 10173) (Glume blotch fungus).